The following is a 388-amino-acid chain: Biotin synthase (388 aa).

A Radical SAM core domain is found at 47–277; sequence WFGRRVKLNY…DVEVRIAGGR (231 aa). Residues cysteine 65, cysteine 69, and cysteine 72 each coordinate [4Fe-4S] cluster. Residues cysteine 109, cysteine 142, cysteine 202, and arginine 272 each contribute to the [2Fe-2S] cluster site. A disordered region spans residues 335-371; the sequence is APAGGCGSEQSAGCGSHEGGGACGSAPAPRTDEARTD.

The protein belongs to the radical SAM superfamily. Biotin synthase family. In terms of assembly, homodimer. [4Fe-4S] cluster is required as a cofactor. It depends on [2Fe-2S] cluster as a cofactor.

It carries out the reaction (4R,5S)-dethiobiotin + (sulfur carrier)-SH + 2 reduced [2Fe-2S]-[ferredoxin] + 2 S-adenosyl-L-methionine = (sulfur carrier)-H + biotin + 2 5'-deoxyadenosine + 2 L-methionine + 2 oxidized [2Fe-2S]-[ferredoxin]. The protein operates within cofactor biosynthesis; biotin biosynthesis; biotin from 7,8-diaminononanoate: step 2/2. Its function is as follows. Catalyzes the conversion of dethiobiotin (DTB) to biotin by the insertion of a sulfur atom into dethiobiotin via a radical-based mechanism. This chain is Biotin synthase, found in Streptomyces avermitilis (strain ATCC 31267 / DSM 46492 / JCM 5070 / NBRC 14893 / NCIMB 12804 / NRRL 8165 / MA-4680).